We begin with the raw amino-acid sequence, 957 residues long: Dystrophin-related protein 2 (957 aa).

Spectrin repeat units lie at residues 102-179 (DHSG…EELE) and 231-337 (EHLL…QLQD). Residues 358 to 383 (WERAISPNKVPYYINHQAQTTCWDHP) enclose the WW domain. The segment at 605 to 661 (KHQTKCSICRQCPIKGFRYRSLKQFNVDICQTCFLTGKASKGNKLHYPIMEYYTPTT) adopts a ZZ-type; degenerate zinc-finger fold. Zn(2+) contacts are provided by Cys-610, Cys-613, Cys-634, and Cys-637. Phosphoserine is present on Ser-748. Residues 877–894 (PPTESDGNGSAGSSLASS) are compositionally biased toward low complexity. Residues 877–923 (PPTESDGNGSAGSSLASSPRQSEGSHPREKGQTTPDTEAADDVGSKS) form a disordered region. The residue at position 910 (Thr-910) is a Phosphothreonine.

As to quaternary structure, interacts with PRX; this enhances phosphorylation. Identified in a dystroglycan complex that contains at least PRX, DRP2, UTRN, DMD and DAG1. In terms of tissue distribution, detected in trigeminal nerve Schwann cells. Detected in brain cortex and hippocampus. Detected in brain membrane fractions and highly enriched in the postsynaptic density (at protein level).

Its subcellular location is the postsynaptic density. It is found in the cell projection. The protein resides in the dendrite. It localises to the perikaryon. The protein localises to the cell membrane. In terms of biological role, required for normal myelination and for normal organization of the cytoplasm and the formation of Cajal bands in myelinating Schwann cells. Required for normal PRX location at appositions between the abaxonal surface of the myelin sheath and the Schwann cell plasma membrane. Possibly involved in membrane-cytoskeleton interactions of the central nervous system. The protein is Dystrophin-related protein 2 (Drp2) of Rattus norvegicus (Rat).